The primary structure comprises 162 residues: Interleukin-15 (162 aa).

The first 29 residues, 1–29, serve as a signal peptide directing secretion; that stretch reads MRISKPHLRSVSIQCYLCLLLNSHFLTEA. Positions 30–48 are excised as a propeptide; the sequence is GIHVFILGCFSAGLPKTEA. 2 disulfide bridges follow: cysteine 83/cysteine 133 and cysteine 90/cysteine 136. N-linked (GlcNAc...) asparagine glycosylation occurs at asparagine 127.

It belongs to the IL-15/IL-21 family.

The protein localises to the secreted. Functionally, cytokine that plays a major role in the development of inflammatory and protective immune responses to microbial invaders and parasites by modulating immune cells of both the innate and adaptive immune systems. Stimulates the proliferation of natural killer cells, T-cells and B-cells and promotes the secretion of several cytokines. In monocytes, induces the production of IL8 and monocyte chemotactic protein 1/CCL2, two chemokines that attract neutrophils and monocytes respectively to sites of infection. Unlike most cytokines, which are secreted in soluble form, IL15 is expressed in association with its high affinity IL15RA on the surface of IL15-producing cells and delivers signals to target cells that express IL2RB and IL2RG receptor subunits. Binding to its receptor triggers the phosphorylation of JAK1 and JAK3 and the recruitment and subsequent phosphorylation of signal transducer and activator of transcription-3/STAT3 and STAT5. In mast cells, induces the rapid tyrosine phosphorylation of STAT6 and thereby controls mast cell survival and release of cytokines such as IL4. The chain is Interleukin-15 (IL15) from Macaca mulatta (Rhesus macaque).